We begin with the raw amino-acid sequence, 320 residues long: Probable cell division protein WhiA (320 aa).

The segment at residues 282–315 is a DNA-binding region (H-T-H motif); that stretch reads SLEELGRAARPQISKDAVAGRIRRLLQRAEKAEQ.

This sequence belongs to the WhiA family.

In terms of biological role, involved in cell division and chromosome segregation. This chain is Probable cell division protein WhiA, found in Bifidobacterium animalis subsp. lactis (strain AD011).